The following is a 496-amino-acid chain: DEAD-box ATP-dependent RNA helicase 38 (496 aa).

The disordered stretch occupies residues 1 to 91 (MADTVEKVPT…SGDTPYTSAS (91 aa)). The residue at position 2 (Ala-2) is an N-acetylalanine. Over residues 7–25 (KVPTVVESSSSSTVEASNS) the composition is skewed to low complexity. Positions 27–40 (EKTEPTTEKKKWGD) are enriched in basic and acidic residues. Residues 41 to 51 (VEDDDDEEEAV) are compositionally biased toward acidic residues. The segment covering 78–91 (KAVTSGDTPYTSAS) has biased composition (polar residues). A Q motif motif is present at residues 91–120 (SRFEDLNLSPELMKGLYVEMKFEKPSKIQA). One can recognise a Helicase ATP-binding domain in the interval 125–301 (MIMTPPHKHL…ARTVKDPNQL (177 aa)). ATP is bound at residue 138–145 (AHNGSGKT). The DEAD box motif lies at 245-248 (DEAD). In terms of domain architecture, Helicase C-terminal spans 329–483 (VIKDQIMELG…EIKSWNSEEE (155 aa)).

It belongs to the DEAD box helicase family. DDX19/DBP5 subfamily. Interacts with NUP214 (via N-terminus). Constitutively expressed.

It localises to the cytoplasm. The protein resides in the nucleus. It carries out the reaction ATP + H2O = ADP + phosphate + H(+). In terms of biological role, ATP-dependent RNA helicase essential for mRNA export from the nucleus. Plays an important role in the positive regulation of CBF/DREB transcription factors. The chain is DEAD-box ATP-dependent RNA helicase 38 (RH38) from Arabidopsis thaliana (Mouse-ear cress).